Reading from the N-terminus, the 123-residue chain is UPF0738 protein BCG9842_B4089 (123 aa).

The protein belongs to the UPF0738 family.

The protein is UPF0738 protein BCG9842_B4089 of Bacillus cereus (strain G9842).